The chain runs to 148 residues: Transcriptional regulator MraZ (148 aa).

2 SpoVT-AbrB domains span residues 7–56 (KERH…EPDI) and 85–128 (LDVV…APER).

It belongs to the MraZ family. In terms of assembly, forms oligomers.

The protein localises to the cytoplasm. Its subcellular location is the nucleoid. The polypeptide is Transcriptional regulator MraZ (Chlorobium phaeobacteroides (strain DSM 266 / SMG 266 / 2430)).